The following is a 209-amino-acid chain: Uracil phosphoribosyltransferase (209 aa).

Residues Arg-79, Arg-104, and 131–139 contribute to the 5-phospho-alpha-D-ribose 1-diphosphate site; that span reads DPMLATGGS. Uracil-binding positions include Ile-194 and 199–201; that span reads GDA. Asp-200 lines the 5-phospho-alpha-D-ribose 1-diphosphate pocket.

The protein belongs to the UPRTase family. Mg(2+) is required as a cofactor.

It catalyses the reaction UMP + diphosphate = 5-phospho-alpha-D-ribose 1-diphosphate + uracil. It functions in the pathway pyrimidine metabolism; UMP biosynthesis via salvage pathway; UMP from uracil: step 1/1. Its activity is regulated as follows. Allosterically activated by GTP. Functionally, catalyzes the conversion of uracil and 5-phospho-alpha-D-ribose 1-diphosphate (PRPP) to UMP and diphosphate. This chain is Uracil phosphoribosyltransferase, found in Streptococcus equi subsp. zooepidemicus (strain MGCS10565).